Reading from the N-terminus, the 105-residue chain is Met repressor (105 aa).

It belongs to the MetJ family. Homodimer.

The protein resides in the cytoplasm. This regulatory protein, when combined with SAM (S-adenosylmethionine) represses the expression of the methionine regulon and of enzymes involved in SAM synthesis. In Photorhabdus laumondii subsp. laumondii (strain DSM 15139 / CIP 105565 / TT01) (Photorhabdus luminescens subsp. laumondii), this protein is Met repressor.